We begin with the raw amino-acid sequence, 173 residues long: NADH-ubiquinone oxidoreductase chain 6 (173 aa).

A run of 6 helical transmembrane segments spans residues 1-21, 27-47, 53-73, 82-102, 106-126, and 141-161; these read MIYFVFVVLMGLVVGLMAVAS, FAALGLVFSAVVGCGFLVGYG, LVLFLIYLGGMLVVFAYSAAL, WGSWSVFLYILVYLFGFLLVG, YGWWYDFYWMSLDVFGEMSVL, and GFLLLVTGWVLLLALFVVLEI.

This sequence belongs to the complex I subunit 6 family.

Its subcellular location is the mitochondrion membrane. The enzyme catalyses a ubiquinone + NADH + 5 H(+)(in) = a ubiquinol + NAD(+) + 4 H(+)(out). In terms of biological role, core subunit of the mitochondrial membrane respiratory chain NADH dehydrogenase (Complex I) that is believed to belong to the minimal assembly required for catalysis. Complex I functions in the transfer of electrons from NADH to the respiratory chain. The immediate electron acceptor for the enzyme is believed to be ubiquinone. The polypeptide is NADH-ubiquinone oxidoreductase chain 6 (MT-ND6) (Latimeria chalumnae (Coelacanth)).